Consider the following 270-residue polypeptide: Cystinosin homolog (270 aa).

Residues 9–75 (LEISYEIVGW…LYFSPVIQKQ (67 aa)) form the PQ-loop 1 domain. The helical transmembrane segment at 14-34 (EIVGWIAFASWSISFYPQLIL) threads the bilayer. The N-linked (GlcNAc...) asparagine glycan is linked to Asn-52. The next 3 helical transmembrane spans lie at 93–113 (VAFS…IFIY), 123–143 (LAIG…FIAL), and 148–168 (WLWL…VKYI). In terms of domain architecture, PQ-loop 2 spans 151–213 (LISIFNSIQV…IQSIDQNSWK (63 aa)). Asn-174 is a glycosylation site (N-linked (GlcNAc...) asparagine). The next 2 membrane-spanning stretches (helical) occupy residues 180–200 (TVGW…ANYL) and 223–243 (LLSL…YVLY). A disordered region spans residues 250 to 270 (KSPETGEESNEPLIDSSHEHV).

This sequence belongs to the cystinosin (TC 2.A.43.1) family.

Its subcellular location is the lysosome membrane. Its function is as follows. Thought to transport cystine out of lysosomes. The sequence is that of Cystinosin homolog from Arabidopsis thaliana (Mouse-ear cress).